Here is a 236-residue protein sequence, read N- to C-terminus: Phosphoribosylaminoimidazole-succinocarboxamide synthase (236 aa).

It belongs to the SAICAR synthetase family.

It carries out the reaction 5-amino-1-(5-phospho-D-ribosyl)imidazole-4-carboxylate + L-aspartate + ATP = (2S)-2-[5-amino-1-(5-phospho-beta-D-ribosyl)imidazole-4-carboxamido]succinate + ADP + phosphate + 2 H(+). Its pathway is purine metabolism; IMP biosynthesis via de novo pathway; 5-amino-1-(5-phospho-D-ribosyl)imidazole-4-carboxamide from 5-amino-1-(5-phospho-D-ribosyl)imidazole-4-carboxylate: step 1/2. This is Phosphoribosylaminoimidazole-succinocarboxamide synthase from Pseudomonas entomophila (strain L48).